Here is a 208-residue protein sequence, read N- to C-terminus: Probable splicing factor, arginine/serine-rich 5 (208 aa).

The 73-residue stretch at 2 to 74 folds into the RRM domain; it reads PRLYLGKIPY…MRLVVEMARG (73 aa). Positions 71-208 are disordered; sequence MARGKPRGND…RSPSPGSPKD (138 aa). The span at 84 to 123 shows a compositional bias: basic residues; sequence SRSPRRRSRSPRRRSRTPPRRRSRSRDRKRSRRSRSRSSS. Residues 128–153 show a composition bias toward basic and acidic residues; sequence PVRESRRRSESRSPSPKRDLKREASR.

This sequence belongs to the splicing factor SR family. In terms of processing, extensively phosphorylated on serine residues in the RS domain.

Its subcellular location is the nucleus. Plays a functionally redundant role in shifting germ cell sexual differentiation in hermaphrodites. This chain is Probable splicing factor, arginine/serine-rich 5 (rsp-5), found in Caenorhabditis elegans.